The sequence spans 399 residues: Protochlorophyllide reductase, chloroplastic (399 aa).

Residues 1–64 (MALQTASMLP…RQKVGAVRAE (64 aa)) constitute a chloroplast transit peptide.

Belongs to the short-chain dehydrogenases/reductases (SDR) family. POR subfamily.

It localises to the plastid. The protein localises to the chloroplast. It carries out the reaction chlorophyllide a + NADP(+) = protochlorophyllide a + NADPH + H(+). It participates in porphyrin-containing compound metabolism; chlorophyll biosynthesis. Functionally, phototransformation of protochlorophyllide (Pchlide) to chlorophyllide (Chlide). This is Protochlorophyllide reductase, chloroplastic (3PCR) from Pisum sativum (Garden pea).